The primary structure comprises 304 residues: Recombination-associated protein RdgC (304 aa).

It belongs to the RdgC family.

The protein resides in the cytoplasm. The protein localises to the nucleoid. May be involved in recombination. In Shewanella baltica (strain OS185), this protein is Recombination-associated protein RdgC.